Consider the following 260-residue polypeptide: Thiazole synthase (260 aa).

Lysine 100 functions as the Schiff-base intermediate with DXP in the catalytic mechanism. 1-deoxy-D-xylulose 5-phosphate is bound by residues glycine 161, 187 to 188 (AG), and 209 to 210 (NT).

It belongs to the ThiG family. As to quaternary structure, homotetramer. Forms heterodimers with either ThiH or ThiS.

It localises to the cytoplasm. The catalysed reaction is [ThiS sulfur-carrier protein]-C-terminal-Gly-aminoethanethioate + 2-iminoacetate + 1-deoxy-D-xylulose 5-phosphate = [ThiS sulfur-carrier protein]-C-terminal Gly-Gly + 2-[(2R,5Z)-2-carboxy-4-methylthiazol-5(2H)-ylidene]ethyl phosphate + 2 H2O + H(+). It functions in the pathway cofactor biosynthesis; thiamine diphosphate biosynthesis. Catalyzes the rearrangement of 1-deoxy-D-xylulose 5-phosphate (DXP) to produce the thiazole phosphate moiety of thiamine. Sulfur is provided by the thiocarboxylate moiety of the carrier protein ThiS. In vitro, sulfur can be provided by H(2)S. The protein is Thiazole synthase of Sorangium cellulosum (strain So ce56) (Polyangium cellulosum (strain So ce56)).